The following is a 664-amino-acid chain: Glycine--tRNA ligase beta subunit (664 aa).

It belongs to the class-II aminoacyl-tRNA synthetase family. Tetramer of two alpha and two beta subunits.

The protein localises to the cytoplasm. The catalysed reaction is tRNA(Gly) + glycine + ATP = glycyl-tRNA(Gly) + AMP + diphosphate. This chain is Glycine--tRNA ligase beta subunit, found in Rickettsia typhi (strain ATCC VR-144 / Wilmington).